The following is a 573-amino-acid chain: Acyl-coenzyme A synthetase ACSM1, mitochondrial (573 aa).

The N-terminal 35 residues, 1-35, are a transit peptide targeting the mitochondrion; the sequence is MQWLKSFQICKVLQGFSLSPTQLHRRLFSRVGAPR. Lys-81 bears the N6-succinyllysine mark. Position 142 is an N6-acetyllysine; alternate (Lys-142). The residue at position 142 (Lys-142) is an N6-succinyllysine; alternate. Lys-179 is subject to N6-succinyllysine. Lys-200 carries the N6-acetyllysine; alternate modification. An N6-succinyllysine; alternate modification is found at Lys-200. At Lys-210 the chain carries N6-acetyllysine. Residue 222–230 coordinates ATP; that stretch reads TSGTTGYPK. An N6-succinyllysine mark is found at Lys-233 and Lys-324. An N6-acetyllysine; alternate mark is found at Lys-352 and Lys-387. Lys-352 and Lys-387 each carry N6-succinyllysine; alternate. ATP-binding residues include Asp-448 and Arg-463. Position 501 is an N6-succinyllysine (Lys-501). Position 527 is an N6-acetyllysine (Lys-527). N6-acetyllysine; alternate is present on Lys-534. Lys-534 bears the N6-succinyllysine; alternate mark. Lys-545 is modified (N6-acetyllysine). Lys-559 is a binding site for ATP.

It belongs to the ATP-dependent AMP-binding enzyme family. As to quaternary structure, monomer. The cofactor is Mg(2+). It depends on Mn(2+) as a cofactor. Highly expressed in liver and kidney.

It localises to the mitochondrion matrix. The protein localises to the mitochondrion. It catalyses the reaction a medium-chain fatty acid + ATP + CoA = a medium-chain fatty acyl-CoA + AMP + diphosphate. The enzyme catalyses benzoate + ATP + CoA = benzoyl-CoA + AMP + diphosphate. The catalysed reaction is (R)-lipoate + GTP + H(+) = (R)-lipoyl-GMP + diphosphate. It carries out the reaction octanoate + ATP + CoA = octanoyl-CoA + AMP + diphosphate. It catalyses the reaction decanoate + ATP + CoA = decanoyl-CoA + AMP + diphosphate. The enzyme catalyses dodecanoate + ATP + CoA = dodecanoyl-CoA + AMP + diphosphate. The catalysed reaction is tetradecanoate + ATP + CoA = tetradecanoyl-CoA + AMP + diphosphate. It carries out the reaction hexanoate + ATP + CoA = hexanoyl-CoA + AMP + diphosphate. It catalyses the reaction butanoate + ATP + CoA = butanoyl-CoA + AMP + diphosphate. The enzyme catalyses hexadecanoate + ATP + CoA = hexadecanoyl-CoA + AMP + diphosphate. Catalyzes the activation of fatty acids by CoA to produce an acyl-CoA, the first step in fatty acid metabolism. Capable of activating medium-chain fatty acids (e.g. butyric (C4) to decanoic (C10) acids), and certain carboxylate-containing xenobiotics, e.g. benzoate. Also catalyzes the activation of lipoate to lipoyl-nucleoside monophosphate. Activates lipoate with GTP at a 1000-fold higher rate than with ATP and activates both (R)- and (S)-lipoate to the respective lipoyl-GMP, with a preference for (R)-lipoate. The sequence is that of Acyl-coenzyme A synthetase ACSM1, mitochondrial (Acsm1) from Mus musculus (Mouse).